The following is a 348-amino-acid chain: Galactose-1-phosphate uridylyltransferase (348 aa).

UDP-alpha-D-glucose is bound at residue 28-31 (RAKR). Zn(2+) contacts are provided by Cys-52 and Cys-55. UDP-alpha-D-glucose contacts are provided by residues Val-61 and 77 to 78 (ND). His-115 contributes to the Zn(2+) binding site. Residues Asn-153 and 159–161 (GCS) contribute to the UDP-alpha-D-glucose site. Zn(2+) is bound at residue His-164. His-166 functions as the Tele-UMP-histidine intermediate in the catalytic mechanism. Gln-168 is a UDP-alpha-D-glucose binding site. Glu-182, His-281, His-296, and His-298 together coordinate Fe cation. UDP-alpha-D-glucose-binding positions include 311-312 (KF), 316-317 (YE), and Gln-323.

The protein belongs to the galactose-1-phosphate uridylyltransferase type 1 family. It depends on Zn(2+) as a cofactor.

The enzyme catalyses alpha-D-galactose 1-phosphate + UDP-alpha-D-glucose = alpha-D-glucose 1-phosphate + UDP-alpha-D-galactose. Its pathway is carbohydrate metabolism; galactose metabolism. This chain is Galactose-1-phosphate uridylyltransferase (galT), found in Salmonella typhimurium (strain LT2 / SGSC1412 / ATCC 700720).